Reading from the N-terminus, the 485-residue chain is Arginine/ornithine antiporter ArcD (485 aa).

11 helical membrane-spanning segments follow: residues 23–43, 48–68, 79–99, 116–136, 148–168, 203–223, 246–266, 269–289, 323–343, 362–382, and 441–461; these read ALLP…LLGL, PLLW…GYTW, IVMG…IASW, LTPA…ATAI, IALV…AGAI, MFPN…VLGL, GTYT…GLAI, YPAL…SILI, LEGS…GGIL, SVGG…ALTA, and VLSY…VVIM.

This sequence belongs to the NhaC Na(+)/H(+) (TC 2.A.35) antiporter family.

It is found in the cell membrane. The catalysed reaction is L-ornithine(in) + L-arginine(out) = L-ornithine(out) + L-arginine(in). Uptake of arginine from the medium in exchange for ornithine. In Halobacterium salinarum (strain ATCC 700922 / JCM 11081 / NRC-1) (Halobacterium halobium), this protein is Arginine/ornithine antiporter ArcD (arcD).